A 239-amino-acid chain; its full sequence is Isopentenyl-diphosphate Delta-isomerase (239 aa).

Lysine 43 contacts substrate. The Mg(2+) site is built by histidine 47 and histidine 58. The Nudix hydrolase domain maps to 56 to 210 (LLHRAFSIFL…KVKVTPWFRL (155 aa)). Substrate-binding residues include arginine 77 and lysine 81. Cysteine 93 is a catalytic residue. Serine 94 serves as a coordination point for substrate. 2 residues coordinate Mg(2+): glutamate 156 and glutamate 158. Residue glutamate 158 is part of the active site.

The protein belongs to the IPP isomerase type 1 family. Requires Mg(2+) as cofactor.

The catalysed reaction is isopentenyl diphosphate = dimethylallyl diphosphate. Its pathway is isoprenoid biosynthesis; dimethylallyl diphosphate biosynthesis; dimethylallyl diphosphate from isopentenyl diphosphate: step 1/1. Catalyzes the 1,3-allylic rearrangement of the homoallylic substrate isopentenyl (IPP) to its highly electrophilic allylic isomer, dimethylallyl diphosphate (DMAPP). The chain is Isopentenyl-diphosphate Delta-isomerase (ipi) from Dictyostelium discoideum (Social amoeba).